The chain runs to 348 residues: Anthranilate phosphoribosyltransferase (348 aa).

5-phospho-alpha-D-ribose 1-diphosphate-binding positions include G83, 86–87 (GD), T91, 93–96 (NVST), 111–119 (KHGNRAASS), and T123. Position 83 (G83) interacts with anthranilate. S95 provides a ligand contact to Mg(2+). Residue N114 participates in anthranilate binding. Anthranilate is bound at residue R169. Mg(2+)-binding residues include D227 and E228.

The protein belongs to the anthranilate phosphoribosyltransferase family. As to quaternary structure, homodimer. Mg(2+) is required as a cofactor.

The enzyme catalyses N-(5-phospho-beta-D-ribosyl)anthranilate + diphosphate = 5-phospho-alpha-D-ribose 1-diphosphate + anthranilate. It participates in amino-acid biosynthesis; L-tryptophan biosynthesis; L-tryptophan from chorismate: step 2/5. In terms of biological role, catalyzes the transfer of the phosphoribosyl group of 5-phosphorylribose-1-pyrophosphate (PRPP) to anthranilate to yield N-(5'-phosphoribosyl)-anthranilate (PRA). The protein is Anthranilate phosphoribosyltransferase of Thermobifida fusca (strain YX).